The sequence spans 253 residues: Ubiquinone/menaquinone biosynthesis C-methyltransferase UbiE (253 aa).

S-adenosyl-L-methionine is bound by residues T76, D97, 125 to 126 (NA), and S142.

This sequence belongs to the class I-like SAM-binding methyltransferase superfamily. MenG/UbiE family.

The enzyme catalyses a 2-demethylmenaquinol + S-adenosyl-L-methionine = a menaquinol + S-adenosyl-L-homocysteine + H(+). The catalysed reaction is a 2-methoxy-6-(all-trans-polyprenyl)benzene-1,4-diol + S-adenosyl-L-methionine = a 5-methoxy-2-methyl-3-(all-trans-polyprenyl)benzene-1,4-diol + S-adenosyl-L-homocysteine + H(+). It functions in the pathway quinol/quinone metabolism; menaquinone biosynthesis; menaquinol from 1,4-dihydroxy-2-naphthoate: step 2/2. Its pathway is cofactor biosynthesis; ubiquinone biosynthesis. Methyltransferase required for the conversion of demethylmenaquinol (DMKH2) to menaquinol (MKH2) and the conversion of 2-polyprenyl-6-methoxy-1,4-benzoquinol (DDMQH2) to 2-polyprenyl-3-methyl-6-methoxy-1,4-benzoquinol (DMQH2). The sequence is that of Ubiquinone/menaquinone biosynthesis C-methyltransferase UbiE from Xanthomonas axonopodis pv. citri (strain 306).